A 227-amino-acid chain; its full sequence is ATP-dependent dethiobiotin synthetase BioD (227 aa).

ATP is bound at residue 13–18; the sequence is DVGKTV. Residue threonine 17 participates in Mg(2+) binding. Lysine 38 is an active-site residue. ATP-binding positions include aspartate 55, 116–119, 176–177, and 205–207; these read EGAG, NR, and PYI. Mg(2+)-binding residues include aspartate 55 and glutamate 116.

Belongs to the dethiobiotin synthetase family. As to quaternary structure, homodimer. Requires Mg(2+) as cofactor.

The protein resides in the cytoplasm. It carries out the reaction (7R,8S)-7,8-diammoniononanoate + CO2 + ATP = (4R,5S)-dethiobiotin + ADP + phosphate + 3 H(+). It participates in cofactor biosynthesis; biotin biosynthesis; biotin from 7,8-diaminononanoate: step 1/2. In terms of biological role, catalyzes a mechanistically unusual reaction, the ATP-dependent insertion of CO2 between the N7 and N8 nitrogen atoms of 7,8-diaminopelargonic acid (DAPA, also called 7,8-diammoniononanoate) to form a ureido ring. In Vibrio campbellii (strain ATCC BAA-1116), this protein is ATP-dependent dethiobiotin synthetase BioD.